We begin with the raw amino-acid sequence, 632 residues long: Probable membrane transporter protein MamO (632 aa).

Residues 25–45 (APVSILAFLILVTFAWGAYLL) form a helical membrane-spanning segment. Residues 78–268 (LYYTVPPAVV…VIVSHLQDVV (191 aa)) are protease-like. Residues His-148 and His-263 each contribute to the a divalent metal cation site. A run of 7 helical transmembrane segments spans residues 340–360 (IGGY…AAGV), 412–432 (LVQW…VVIG), 434–454 (FIGN…FALI), 513–533 (AVLG…GGVI), 550–570 (IANS…VAFI), 582–602 (APVT…ILGA), and 612–632 (VLKG…LTTV). Positions 365–632 (MTMGGGVLQV…AIAIKMLTTV (268 aa)) are TSUP-like.

It in the N-terminal section; belongs to the peptidase S1C family. This sequence in the C-terminal section; belongs to the 4-toluene sulfonate uptake permease (TSUP) (TC 2.A.102) family. It depends on a metal cation as a cofactor. In terms of processing, subject to proteolytic cleavage by MamE.

The protein localises to the magnetosome membrane. Its function is as follows. Plays 2 roles; promotes magnetite nucleation/formation and activates the MamE protease. Despite its near conservation of a protease-like sequence, this is probably not a protease. Required in conjunction with MamP for proteolysis of at least MamE, itself and MamP. May transport a solute that controls MamE's protease activity. May place individual iron atoms into the magnetite lattice. One of 7 genes (mamLQBIEMO) able to induce magnetosome membrane biogenesis; coexpression of mamLQRBIEMO in a deletion of the 17 gene mamAB operon restores magnetosome vesicle formation but not magnetite biosynthesis. The polypeptide is Probable membrane transporter protein MamO (Magnetospirillum gryphiswaldense (strain DSM 6361 / JCM 21280 / NBRC 15271 / MSR-1)).